The sequence spans 331 residues: Pectinesterase (331 aa).

Residues 1-17 (MVKSVLASALFAVSALA) form the signal peptide. Residue Gln-139 participates in substrate binding. Asp-162 acts as the Proton donor in catalysis. Residue Asp-183 is the Nucleophile of the active site. 2 residues coordinate substrate: Arg-248 and Trp-250.

This sequence belongs to the pectinesterase family.

The protein resides in the secreted. It catalyses the reaction [(1-&gt;4)-alpha-D-galacturonosyl methyl ester](n) + n H2O = [(1-&gt;4)-alpha-D-galacturonosyl](n) + n methanol + n H(+). It functions in the pathway glycan metabolism; pectin degradation; 2-dehydro-3-deoxy-D-gluconate from pectin: step 1/5. In terms of biological role, involved in maceration and soft-rotting of plant tissue. This is Pectinesterase (pme1) from Aspergillus aculeatus.